The primary structure comprises 77 residues: Probable Fe(2+)-trafficking protein (77 aa).

This sequence belongs to the Fe(2+)-trafficking protein family. As to quaternary structure, monomer.

Functionally, could be a mediator in iron transactions between iron acquisition and iron-requiring processes, such as synthesis and/or repair of Fe-S clusters in biosynthetic enzymes. This is Probable Fe(2+)-trafficking protein from Buchnera aphidicola subsp. Acyrthosiphon pisum (strain APS) (Acyrthosiphon pisum symbiotic bacterium).